Reading from the N-terminus, the 464-residue chain is tRNA-2-methylthio-N(6)-dimethylallyladenosine synthase (464 aa).

The MTTase N-terminal domain occupies 19-135 (GSYWITTFGC…LENLLERVDS (117 aa)). 6 residues coordinate [4Fe-4S] cluster: C28, C64, C98, C170, C174, and C177. The region spanning 156–393 (RDSTICGWVN…NELVEATSRK (238 aa)) is the Radical SAM core domain. The TRAM domain occupies 396-464 (QRYLNNTESV…SFSLSGQIYK (69 aa)).

It belongs to the methylthiotransferase family. MiaB subfamily. In terms of assembly, monomer. [4Fe-4S] cluster serves as cofactor.

Its subcellular location is the cytoplasm. It carries out the reaction N(6)-dimethylallyladenosine(37) in tRNA + (sulfur carrier)-SH + AH2 + 2 S-adenosyl-L-methionine = 2-methylsulfanyl-N(6)-dimethylallyladenosine(37) in tRNA + (sulfur carrier)-H + 5'-deoxyadenosine + L-methionine + A + S-adenosyl-L-homocysteine + 2 H(+). Catalyzes the methylthiolation of N6-(dimethylallyl)adenosine (i(6)A), leading to the formation of 2-methylthio-N6-(dimethylallyl)adenosine (ms(2)i(6)A) at position 37 in tRNAs that read codons beginning with uridine. The sequence is that of tRNA-2-methylthio-N(6)-dimethylallyladenosine synthase from Prochlorococcus marinus (strain MIT 9515).